Here is a 99-residue protein sequence, read N- to C-terminus: Putative regulatory protein Kole_1849 (99 aa).

It belongs to the RemA family.

This Kosmotoga olearia (strain ATCC BAA-1733 / DSM 21960 / TBF 19.5.1) protein is Putative regulatory protein Kole_1849.